The chain runs to 237 residues: Lectin alpha chain (237 aa).

Residues E8 and D10 each coordinate Mn(2+). D10, Y12, N14, and D19 together coordinate Ca(2+). Residue Y12 coordinates a carbohydrate. The Mn(2+) site is built by D19, H24, and S34. Residue 99 to 100 coordinates a carbohydrate; sequence LY. Ca(2+) is bound at residue D208. Residue R228 participates in a carbohydrate binding.

The protein belongs to the leguminous lectin family. As to quaternary structure, equilibrium between homodimer and homotetramer. Oligomerization is pH-dependent with homotetramers forming at pH 6.5 and above. In terms of processing, the beta and gamma chains are produced by partial proteolytic processing of the lectin alpha chain by an asparaginyl endopeptidase. Mixture of 60% alpha lectin and 40% of its beta and gamma proteolytic fragments.

In terms of biological role, D-mannose/D-glucose-binding lectin. Has anti-inflammatory activity in rats. Induces histamine release in mast cells from rat. Induces lymphocyte proliferation and IFNG production. The chain is Lectin alpha chain from Dioclea guianensis.